A 121-amino-acid polypeptide reads, in one-letter code: Met-lysine-1b (121 aa).

The N-terminal stretch at 1 to 22 is a signal peptide; sequence MKSFVFALALIVAFACISESKS. The propeptide occupies 23–69; the sequence is DHTGYEEEENLEDSELTDLVAAALLEELAEASEMDDLSYTEEAGGER. M120 bears the Methionine amide mark.

In terms of tissue distribution, expressed by the venom gland.

The protein localises to the secreted. Shows no antimicrobial activity against Gram-positive bacterium B.subtilis B-501 or Gram-negative bacterium E.coli DH5-alpha at concentrations up to 20 ug/ml. Shows no toxicity towards insect (S.carnaria) larvae. The polypeptide is Met-lysine-1b (Lachesana tarabaevi (Spider)).